A 464-amino-acid chain; its full sequence is ATP synthase subunit beta 2 (464 aa).

147-154 (GGAGVGKT) provides a ligand contact to ATP.

It belongs to the ATPase alpha/beta chains family. F-type ATPases have 2 components, CF(1) - the catalytic core - and CF(0) - the membrane proton channel. CF(1) has five subunits: alpha(3), beta(3), gamma(1), delta(1), epsilon(1). CF(0) has four main subunits: a(1), b(1), b'(1) and c(9-12).

It localises to the cell inner membrane. The enzyme catalyses ATP + H2O + 4 H(+)(in) = ADP + phosphate + 5 H(+)(out). In terms of biological role, produces ATP from ADP in the presence of a proton gradient across the membrane. The catalytic sites are hosted primarily by the beta subunits. This Cereibacter sphaeroides (strain ATCC 17023 / DSM 158 / JCM 6121 / CCUG 31486 / LMG 2827 / NBRC 12203 / NCIMB 8253 / ATH 2.4.1.) (Rhodobacter sphaeroides) protein is ATP synthase subunit beta 2.